The sequence spans 468 residues: Asparagine--tRNA ligase (468 aa).

Belongs to the class-II aminoacyl-tRNA synthetase family. In terms of assembly, homodimer.

It is found in the cytoplasm. The enzyme catalyses tRNA(Asn) + L-asparagine + ATP = L-asparaginyl-tRNA(Asn) + AMP + diphosphate + H(+). This Parabacteroides distasonis (strain ATCC 8503 / DSM 20701 / CIP 104284 / JCM 5825 / NCTC 11152) protein is Asparagine--tRNA ligase.